The following is a 273-amino-acid chain: uncharacterized protein (273 aa).

It is found in the virion. This is an uncharacterized protein from Acanthamoeba polyphaga (Amoeba).